Reading from the N-terminus, the 54-residue chain is uncharacterized protein (54 aa).

The helical transmembrane segment at 21 to 43 threads the bilayer; the sequence is SYVVCLYMCGSDCACICVLACVV.

It is found in the membrane. This is an uncharacterized protein from Saccharomyces cerevisiae (strain ATCC 204508 / S288c) (Baker's yeast).